Reading from the N-terminus, the 89-residue chain is MAKKSKIAKLHHQEALVKKYAEKRKELKAKGDYIGLSKLPRNSSAVRLHNRDRYDGRPHAYMRKFGMSRIKFRELAHKGQIPGVRKASW.

The protein belongs to the universal ribosomal protein uS14 family. Part of the 30S ribosomal subunit. Contacts proteins S3 and S10.

Its function is as follows. Binds 16S rRNA, required for the assembly of 30S particles and may also be responsible for determining the conformation of the 16S rRNA at the A site. The protein is Small ribosomal subunit protein uS14A of Limosilactobacillus reuteri (strain DSM 20016) (Lactobacillus reuteri).